A 607-amino-acid chain; its full sequence is MRELRVAVLIIAVSLPSFSASDRQGDALYDMKQKLNVTGNQLSDWNQNQVNPCTWNSVICDNNNNVIQVTLAARGFAGVLSPRIGELKYLTVLSLAGNRISGGIPEQFGNLSSLTSLDLEDNLLVGEIPASLGQLSKLQLLILSDNNFNGSIPDSLAKISSLTDIRLAYNNLSGQIPGPLFQVARYNFSGNHLNCGTNFPHSCSTNMSYQSGSHSSKIGIVLGTVGGVIGLLIVAALFLFCKGRRKSHLREVFVDVAGEDDRRIAFGQLKRFAWRELQIATDNFSERNVLGQGGFGKVYKGVLPDGTKIAVKRLTDYESPGGEAAFLREVELISVAVHRNLLKLIGFCTTQTERLLVYPFMQNLSVAYRLRDFKPGEPVLNWPERKRVAIGTARGLEYLHEHCNPKIIHRDVKAANVLLDEDFEPVVGDFGLAKLVDVQKTSVTTQVRGTMGHIAPEYLSTGKSSERTDVFGYGIMLLELVTGQRAIDFSRLEEEDDVLLLDHVKKLQREGQLGSIVDRNLNQNYDDEEVEMMIQIALLCTQSSPEDRPSMSEVVRMLEGEGLAERWEEWQQVEVTRRQEYERMQRRFDWGEDSVYNQEAIELSGGR.

The N-terminal stretch at 1–21 (MRELRVAVLIIAVSLPSFSAS) is a signal peptide. At 22-219 (DRQGDALYDM…QSGSHSSKIG (198 aa)) the chain is on the extracellular side. 2 N-linked (GlcNAc...) asparagine glycosylation sites follow: Asn-36 and Asn-110. LRR repeat units lie at residues 87-110 (LKYLTVLSLAGNRISGGIPEQFGN), 111-135 (LSSLTSLDLEDNLLVGEIPASLGQL), 136-159 (SKLQLLILSDNNFNGSIPDSLAKI), and 160-183 (SSLTDIRLAYNNLSGQIPGPLFQV). Asn-149, Asn-171, Asn-187, and Asn-206 each carry an N-linked (GlcNAc...) asparagine glycan. A helical membrane pass occupies residues 220-240 (IVLGTVGGVIGLLIVAALFLF). Residues 241–607 (CKGRRKSHLR…QEAIELSGGR (367 aa)) are Cytoplasmic-facing. The 280-residue stretch at 284-563 (FSERNVLGQG…VVRMLEGEGL (280 aa)) folds into the Protein kinase domain. Residues 290–298 (LGQGGFGKV) and Lys-312 each bind ATP. Asp-411 functions as the Proton acceptor in the catalytic mechanism.

The protein belongs to the protein kinase superfamily. Ser/Thr protein kinase family.

The protein resides in the cell membrane. The enzyme catalyses L-seryl-[protein] + ATP = O-phospho-L-seryl-[protein] + ADP + H(+). It catalyses the reaction L-threonyl-[protein] + ATP = O-phospho-L-threonyl-[protein] + ADP + H(+). Its function is as follows. May be involved in the regulation of plant growth through the brassinosteroid (BR) signaling pathway. The protein is LRR receptor kinase SERK2 of Oryza sativa subsp. japonica (Rice).